A 506-amino-acid chain; its full sequence is Glutamate--tRNA ligase (506 aa).

Residues 12 to 22 (PSPTGDPHVGT) carry the 'HIGH' region motif. Residues 253–257 (KLSKR) carry the 'KMSKS' region motif. Lys256 is an ATP binding site.

The protein belongs to the class-I aminoacyl-tRNA synthetase family. Glutamate--tRNA ligase type 1 subfamily. As to quaternary structure, monomer.

It is found in the cytoplasm. It catalyses the reaction tRNA(Glu) + L-glutamate + ATP = L-glutamyl-tRNA(Glu) + AMP + diphosphate. In terms of biological role, catalyzes the attachment of glutamate to tRNA(Glu) in a two-step reaction: glutamate is first activated by ATP to form Glu-AMP and then transferred to the acceptor end of tRNA(Glu). The polypeptide is Glutamate--tRNA ligase (Chlamydia trachomatis serovar A (strain ATCC VR-571B / DSM 19440 / HAR-13)).